The following is a 226-amino-acid chain: UPF0758 protein GWCH70_2550 (226 aa).

Residues 104-226 (VIRSPEDGAK…FVSLKEKGYV (123 aa)) form the MPN domain. Residues H175, H177, and D188 each coordinate Zn(2+). Residues 175–188 (HNHPSGDPTPSRED) carry the JAMM motif motif.

The protein belongs to the UPF0758 family.

The protein is UPF0758 protein GWCH70_2550 of Geobacillus sp. (strain WCH70).